We begin with the raw amino-acid sequence, 321 residues long: Nodulation protein D 1 (321 aa).

Residues 6 to 63 enclose the HTH lysR-type domain; that stretch reads LDLNLLVALDALMTERKLTAAARSINLSQPAMSAAITRLRTYFRDELFTMNGRELVPT. Positions 23–42 form a DNA-binding region, H-T-H motif; sequence LTAAARSINLSQPAMSAAIT.

It belongs to the LysR transcriptional regulatory family.

In terms of biological role, nodD regulates the expression of the nodABCFE genes which encode other nodulation proteins. NodD is also a negative regulator of its own expression. Binds flavonoids as inducers. This chain is Nodulation protein D 1 (nodD1), found in Bradyrhizobium japonicum.